Here is a 478-residue protein sequence, read N- to C-terminus: MVRAKWKMVVSLILFMVSPGDGLFHAVYRSILVSQSFKGDAGQPLFLSPYIKNGKIKEGQRKSMVSPFPGMNDKSYAGYITVNQTYNSNLFFWFFPARMQPEDAPVVLWLQGGPGGSSMFGLFVEHGPYIITSNMTVVARDFPWTFTLSMLYIDNPVGTGFSFTDHFQGYATSEDDVAQDLYSALIQFFTLFPEYAKNDFYVTGESYAGKYVPALAHYIHSLNPVRKFKIRLKGIAIGDAYTDPESIIGGYAAFLYEIGLLDEQQQKYFQKQCSKCVKYIKEQEWMKAFEILDKLLDGDVTTGSSFFQNVTGCTNYYNILQCTEPKEQSYFAKFLTLPQVRQAIHVGNQNFSDGAEVEKHLREDTVKSVKPWLSEIMNYYKVLIYNGQLDIIVAAALTERSLMAMDWKGSRAYRRARRKVWKIFKSDNEVAGYVRRVGKFHQVIVRGGGHILPYDQPMRSFDMINRFIYDRGWEPYNS.

The N-terminal stretch at 1–22 (MVRAKWKMVVSLILFMVSPGDG) is a signal peptide. N-linked (GlcNAc...) asparagine glycosylation is found at Asn-83 and Asn-134. Ser-206 is an active-site residue. Residues Asn-309 and Asn-350 are each glycosylated (N-linked (GlcNAc...) asparagine). Catalysis depends on residues Asp-390 and His-450.

Belongs to the peptidase S10 family.

Functionally, may be involved in the digestion of phagocytosed particles in the lysosome, participation in an inflammatory protease cascade, and trimming of peptides for antigen presentation. In Mus musculus (Mouse), this protein is Probable serine carboxypeptidase CPVL (Cpvl).